A 180-amino-acid polypeptide reads, in one-letter code: Fucolectin-2 (180 aa).

A signal peptide spans 1–22 (MKVKMIMLLFQILAILTLKSDS). The interval 31–179 (QENVALRGRA…VEVNVLFPAP (149 aa)) is F5/8 type C-like. Ca(2+)-binding residues include asparagine 58, aspartate 61, asparagine 63, and serine 72. Disulfide bonds link cysteine 73–cysteine 168, cysteine 104–cysteine 105, and cysteine 130–cysteine 146. Alpha-L-fucose is bound by residues histidine 75 and arginine 101. The Cell attachment site signature appears at 101–103 (RGD). An alpha-L-fucose-binding site is contributed by arginine 108. Residues cysteine 168 and glutamate 169 each contribute to the Ca(2+) site.

It belongs to the fucolectin family. As to quaternary structure, homotrimer. Parenchymal hepatocytes.

The protein resides in the secreted. It is found in the extracellular space. In terms of biological role, acts as a defensive agent. Recognizes blood group fucosylated oligosaccharides including A, B, H and Lewis B-type antigens. Does not recognize Lewis A antigen and has low affinity for monovalent haptens. The polypeptide is Fucolectin-2 (Anguilla japonica (Japanese eel)).